The chain runs to 357 residues: O-methyltransferase 1, chloroplastic (357 aa).

Residues 1-53 (MPVLPWLAAAATTPVRRSPPLPATPRALLRLPASSFPPWSNCAKSGLPPRGPF) constitute a chloroplast transit peptide. Residues 50-71 (RGPFATAADTPLGGSLPEPEEE) form a disordered region.

Belongs to the methyltransferase superfamily. LCMT family. As to expression, expressed in roots, leaf sheaths, flag leaves and panicles.

It is found in the plastid. The protein localises to the chloroplast. The catalysed reaction is N-acetylserotonin + S-adenosyl-L-methionine = melatonin + S-adenosyl-L-homocysteine + H(+). It functions in the pathway aromatic compound metabolism; melatonin biosynthesis; melatonin from serotonin: step 1/2. Functionally, involved in melatonin biosynthesis. Can function as acetylserotonin O-methyltransferase. Catalyzes the transfer of a methyl group onto N-acetylserotonin, producing melatonin (N-acetyl-5-methoxytryptamine). Involved in the regulation of jasmonate- and brassinosteroid-mediated plant growth and defense responses. In Oryza sativa subsp. japonica (Rice), this protein is O-methyltransferase 1, chloroplastic.